A 54-amino-acid chain; its full sequence is Large ribosomal subunit protein bL32c (54 aa).

The disordered stretch occupies residues 1–20 (MAVPKKKMSKSRRNSRKSNW).

This sequence belongs to the bacterial ribosomal protein bL32 family.

The protein localises to the plastid. Its subcellular location is the chloroplast. This chain is Large ribosomal subunit protein bL32c (rpl32), found in Euglena gracilis.